A 111-amino-acid chain; its full sequence is T cell receptor beta variable 29-1 (111 aa).

The first 16 residues, 1–16 (MLSLLLLLLGLGSVFS), serve as a signal peptide directing secretion. The region spanning 17-111 (AVISQKPSRD…DSSIYLCSVE (95 aa)) is the Ig-like domain. Cysteine 38 and cysteine 108 form a disulfide bridge. Asparagine 87 is a glycosylation site (N-linked (GlcNAc...) asparagine).

In terms of assembly, alpha-beta TR is a heterodimer composed of an alpha and beta chain; disulfide-linked. The alpha-beta TR is associated with the transmembrane signaling CD3 coreceptor proteins to form the TR-CD3 (TcR or TCR). The assembly of alpha-beta TR heterodimers with CD3 occurs in the endoplasmic reticulum where a single alpha-beta TR heterodimer associates with one CD3D-CD3E heterodimer, one CD3G-CD3E heterodimer and one CD247 homodimer forming a stable octameric structure. CD3D-CD3E and CD3G-CD3E heterodimers preferentially associate with TR alpha and TR beta chains, respectively. The association of the CD247 homodimer is the last step of TcR assembly in the endoplasmic reticulum and is required for transport to the cell surface.

It localises to the cell membrane. Its function is as follows. V region of the variable domain of T cell receptor (TR) beta chain that participates in the antigen recognition. Alpha-beta T cell receptors are antigen specific receptors which are essential to the immune response and are present on the cell surface of T lymphocytes. Recognize peptide-major histocompatibility (MH) (pMH) complexes that are displayed by antigen presenting cells (APC), a prerequisite for efficient T cell adaptive immunity against pathogens. Binding of alpha-beta TR to pMH complex initiates TR-CD3 clustering on the cell surface and intracellular activation of LCK that phosphorylates the ITAM motifs of CD3G, CD3D, CD3E and CD247 enabling the recruitment of ZAP70. In turn ZAP70 phosphorylates LAT, which recruits numerous signaling molecules to form the LAT signalosome. The LAT signalosome propagates signal branching to three major signaling pathways, the calcium, the mitogen-activated protein kinase (MAPK) kinase and the nuclear factor NF-kappa-B (NF-kB) pathways, leading to the mobilization of transcription factors that are critical for gene expression and essential for T cell growth and differentiation. The T cell repertoire is generated in the thymus, by V-(D)-J rearrangement. This repertoire is then shaped by intrathymic selection events to generate a peripheral T cell pool of self-MH restricted, non-autoaggressive T cells. Post-thymic interaction of alpha-beta TR with the pMH complexes shapes TR structural and functional avidity. The polypeptide is T cell receptor beta variable 29-1 (Homo sapiens (Human)).